Here is a 206-residue protein sequence, read N- to C-terminus: Macrophage immunometabolism regulator (206 aa).

Met-1 is subject to N-acetylmethionine. The interval 1–41 (MEVDINGESRSTLTTLPFPGAEANSPGKAEAEKPRCSSTPC) is disordered. Phosphoserine occurs at positions 25, 140, and 167.

The protein belongs to the UNC119-binding protein family. Interacts with UNC119 and UNC119B; interaction preferentially takes place when UNC119 and UNC119B are unliganded with myristoylated proteins. Post-translationally, phosphorylated. As to expression, high expression in normal macrophages, monocytes, and cultured rheumatoid arthritis synovial fibroblasts (RASFs), with lower expression in B- and T-cells, and little to no expression in other tissues and cell lines.

It localises to the cytoplasm. The protein localises to the cell projection. The protein resides in the cilium. Functionally, regulates the macrophage function, by enhancing the resolution of inflammation and wound repair functions mediated by M2 macrophages. The regulation of macrophage function is, due at least in part, to its ability to inhibit glycolysis. May also play a role in trafficking of proteins via its interaction with UNC119 and UNC119B cargo adapters: may help the release of UNC119 and UNC119B cargo or the recycling of UNC119 and UNC119B. May play a role in ciliary membrane localization via its interaction with UNC119B and protein transport into photoreceptor cells. The chain is Macrophage immunometabolism regulator from Homo sapiens (Human).